A 286-amino-acid polypeptide reads, in one-letter code: Shikimate dehydrogenase (NADP(+)) (286 aa).

Shikimate contacts are provided by residues 19–21 and Thr66; that span reads SLS. Lys70 acts as the Proton acceptor in catalysis. Shikimate-binding residues include Asn91 and Asp107. Residues 129–133 and Leu229 each bind NADP(+); that span reads GSGGA. Residue Tyr231 coordinates shikimate. Position 252 (Gly252) interacts with NADP(+).

It belongs to the shikimate dehydrogenase family. Homodimer.

It carries out the reaction shikimate + NADP(+) = 3-dehydroshikimate + NADPH + H(+). It functions in the pathway metabolic intermediate biosynthesis; chorismate biosynthesis; chorismate from D-erythrose 4-phosphate and phosphoenolpyruvate: step 4/7. Involved in the biosynthesis of the chorismate, which leads to the biosynthesis of aromatic amino acids. Catalyzes the reversible NADPH linked reduction of 3-dehydroshikimate (DHSA) to yield shikimate (SA). The polypeptide is Shikimate dehydrogenase (NADP(+)) (Prochlorococcus marinus (strain MIT 9215)).